The primary structure comprises 69 residues: Omega-oxotoxin-Ol1a (69 aa).

Residues aspartate 1–lysine 68 form the Oxytoxin-type inhibitor cystine knot (ICK) domain. Intrachain disulfides connect cysteine 4/cysteine 18, cysteine 11/cysteine 23, cysteine 15/cysteine 64, cysteine 17/cysteine 52, and cysteine 25/cysteine 50. An Asparagine amide modification is found at asparagine 69.

Belongs to the spiderine family. Spiderine subfamily. In terms of tissue distribution, expressed by the venom gland.

Its subcellular location is the secreted. Weak blocker of vertebrate P/Q-, N- and L-type voltage-gated calcium channels (Cav1 and Cav2). Is both paralytic and lethal when injected into lepidopteran larvae. Is not toxic to mice. This chain is Omega-oxotoxin-Ol1a, found in Oxyopes lineatus (Lynx spider).